Reading from the N-terminus, the 126-residue chain is Holo-[acyl-carrier-protein] synthase (126 aa).

Residues Asp9 and Glu58 each contribute to the Mg(2+) site.

The protein belongs to the P-Pant transferase superfamily. AcpS family. The cofactor is Mg(2+).

It localises to the cytoplasm. It catalyses the reaction apo-[ACP] + CoA = holo-[ACP] + adenosine 3',5'-bisphosphate + H(+). Functionally, transfers the 4'-phosphopantetheine moiety from coenzyme A to a Ser of acyl-carrier-protein. This is Holo-[acyl-carrier-protein] synthase from Buchnera aphidicola subsp. Schizaphis graminum (strain Sg).